We begin with the raw amino-acid sequence, 341 residues long: Ribosomal RNA small subunit methyltransferase H (341 aa).

S-adenosyl-L-methionine is bound by residues G47–Y49, D64, F91, D109, and Q116.

This sequence belongs to the methyltransferase superfamily. RsmH family.

Its subcellular location is the cytoplasm. The catalysed reaction is cytidine(1402) in 16S rRNA + S-adenosyl-L-methionine = N(4)-methylcytidine(1402) in 16S rRNA + S-adenosyl-L-homocysteine + H(+). In terms of biological role, specifically methylates the N4 position of cytidine in position 1402 (C1402) of 16S rRNA. This Rhizobium leguminosarum bv. trifolii (strain WSM1325) protein is Ribosomal RNA small subunit methyltransferase H.